The sequence spans 480 residues: Protein nucleotidyltransferase YdiU (480 aa).

Glycine 86, glycine 88, arginine 89, lysine 109, aspartate 121, glycine 122, arginine 172, and arginine 179 together coordinate ATP. The active-site Proton acceptor is the aspartate 248. Mg(2+)-binding residues include asparagine 249 and aspartate 258. Aspartate 258 contributes to the ATP binding site.

This sequence belongs to the SELO family. Requires Mg(2+) as cofactor. Mn(2+) is required as a cofactor.

The catalysed reaction is L-seryl-[protein] + ATP = 3-O-(5'-adenylyl)-L-seryl-[protein] + diphosphate. It catalyses the reaction L-threonyl-[protein] + ATP = 3-O-(5'-adenylyl)-L-threonyl-[protein] + diphosphate. The enzyme catalyses L-tyrosyl-[protein] + ATP = O-(5'-adenylyl)-L-tyrosyl-[protein] + diphosphate. It carries out the reaction L-histidyl-[protein] + UTP = N(tele)-(5'-uridylyl)-L-histidyl-[protein] + diphosphate. The catalysed reaction is L-seryl-[protein] + UTP = O-(5'-uridylyl)-L-seryl-[protein] + diphosphate. It catalyses the reaction L-tyrosyl-[protein] + UTP = O-(5'-uridylyl)-L-tyrosyl-[protein] + diphosphate. Functionally, nucleotidyltransferase involved in the post-translational modification of proteins. It can catalyze the addition of adenosine monophosphate (AMP) or uridine monophosphate (UMP) to a protein, resulting in modifications known as AMPylation and UMPylation. This is Protein nucleotidyltransferase YdiU from Salmonella paratyphi C (strain RKS4594).